The following is a 332-amino-acid chain: L-lactate dehydrogenase A chain (332 aa).

Residues 29 to 57 and Arg-99 each bind NAD(+); that span reads GMVG…MEDK. Substrate is bound by residues Arg-106, Asn-138, and Arg-169. An NAD(+)-binding site is contributed by Asn-138. His-193 functions as the Proton acceptor in the catalytic mechanism. Residue Thr-248 participates in substrate binding.

This sequence belongs to the LDH/MDH superfamily. LDH family. In terms of assembly, homotetramer.

Its subcellular location is the cytoplasm. The catalysed reaction is (S)-lactate + NAD(+) = pyruvate + NADH + H(+). It functions in the pathway fermentation; pyruvate fermentation to lactate; (S)-lactate from pyruvate: step 1/1. Interconverts simultaneously and stereospecifically pyruvate and lactate with concomitant interconversion of NADH and NAD(+). In Sphyraena argentea (Pacific barracuda), this protein is L-lactate dehydrogenase A chain (ldha).